Consider the following 191-residue polypeptide: Probable DNA-directed RNA polymerase subunit delta (191 aa).

The HTH HARE-type domain maps to 14-83 (LSMIEVARAI…GENKWGLRSW (70 aa)). Acidic residues-rich tracts occupy residues 117–136 (GDED…DFTE) and 142–191 (EYDE…EEEV). The disordered stretch occupies residues 117 to 191 (GDEDAIDYND…DEEEEEEEEV (75 aa)).

This sequence belongs to the RpoE family. In terms of assembly, RNAP is composed of a core of 2 alpha, a beta and a beta' subunits. The core is associated with a delta subunit and one of several sigma factors.

Participates in both the initiation and recycling phases of transcription. In the presence of the delta subunit, RNAP displays an increased specificity of transcription, a decreased affinity for nucleic acids, and an increased efficiency of RNA synthesis because of enhanced recycling. This is Probable DNA-directed RNA polymerase subunit delta from Streptococcus agalactiae serotype Ia (strain ATCC 27591 / A909 / CDC SS700).